A 124-amino-acid chain; its full sequence is MEYEFRRNSLTGTYLASFSMDHEVLGQWFSEELGPELAKIQQVLDIIKDIQAGKRDSWRLIGGDLTLDLDEEQARIYANALGFEQEYELEESMSLYDAESEAYCGLEDLEEALLSWYEFVEKGR.

The protein belongs to the UPF0231 family.

This is UPF0231 protein Shewmr4_0656 from Shewanella sp. (strain MR-4).